The chain runs to 599 residues: MFDPKPVLKNLPNLPGVYRMINAQDEVIYVGKARDLKKRVSSYFQKNLPSARTRLMVSNIARIETTVTRSEAEALLLENNLIKGFMPRYNVLFRDDKSYPYIALTGDTFPRLAFHRGAQRKGSSYFGPFPNAVAVRESIQLLQKVFRLRTCENTVFANRSRPCLLHQIERCTAPCVGFISEEDYRRDVMHASLFLQGKEQQVMDELGEKMNEAAEKMEYELAAVYRDRIQSLRQVQAKQFVSDFNVSDADVIACAELEGQWCVNLVMIRGGHHLGDKSFFPKNADGADLETTMEAFLEQHYMAGAIPPLLIVGASLETAALEEVFSEQAGRRIRINTHPIGDKRVWLKMAHTNAQLALSQRIAQQANQQSRLNALREALGLPESTERIECFDISHTMGEATVASCVVFDKGAMQSSEYRRYNITGITPGDDYAAMRDVLTRRYRKVAAGEGKRPDLVFIDGGKGQLGVAVEVLNEVGLPDIQLVGIAKGEERKPGLEQMFFPEREEPVSLKKDHPGLHLLQQIRDEAHRFAITGHRAKRGKARMHSSLEDISGIGAKRRKSLLTRFGGLDGVKNASVDEIAQVDGISHALAQKIYEELH.

The 79-residue stretch at 13 to 91 folds into the GIY-YIG domain; the sequence is NLPGVYRMIN…IKGFMPRYNV (79 aa). The UVR domain occupies 200–235; that stretch reads QQVMDELGEKMNEAAEKMEYELAAVYRDRIQSLRQV.

The protein belongs to the UvrC family. As to quaternary structure, interacts with UvrB in an incision complex.

It is found in the cytoplasm. Functionally, the UvrABC repair system catalyzes the recognition and processing of DNA lesions. UvrC both incises the 5' and 3' sides of the lesion. The N-terminal half is responsible for the 3' incision and the C-terminal half is responsible for the 5' incision. The polypeptide is UvrABC system protein C (Methylobacillus flagellatus (strain ATCC 51484 / DSM 6875 / VKM B-1610 / KT)).